The sequence spans 347 residues: 4-hydroxy-3-methylbut-2-en-1-yl diphosphate synthase (flavodoxin) (347 aa).

Cys-259, Cys-262, Cys-294, and Glu-301 together coordinate [4Fe-4S] cluster.

It belongs to the IspG family. Requires [4Fe-4S] cluster as cofactor.

It carries out the reaction (2E)-4-hydroxy-3-methylbut-2-enyl diphosphate + oxidized [flavodoxin] + H2O + 2 H(+) = 2-C-methyl-D-erythritol 2,4-cyclic diphosphate + reduced [flavodoxin]. Its pathway is isoprenoid biosynthesis; isopentenyl diphosphate biosynthesis via DXP pathway; isopentenyl diphosphate from 1-deoxy-D-xylulose 5-phosphate: step 5/6. Its function is as follows. Converts 2C-methyl-D-erythritol 2,4-cyclodiphosphate (ME-2,4cPP) into 1-hydroxy-2-methyl-2-(E)-butenyl 4-diphosphate. The chain is 4-hydroxy-3-methylbut-2-en-1-yl diphosphate synthase (flavodoxin) from Caldicellulosiruptor saccharolyticus (strain ATCC 43494 / DSM 8903 / Tp8T 6331).